A 362-amino-acid polypeptide reads, in one-letter code: RNA-binding protein 48 (362 aa).

An RRM domain is found at 46–124 (WYLLIQGVPA…GLLHVCYAPE (79 aa)). The segment at 334–362 (EVISSVPKPPEDKVEDVHRSRPLKQRRRI) is disordered. Over residues 342-352 (PPEDKVEDVHR) the composition is skewed to basic and acidic residues. A compositionally biased stretch (basic residues) spans 353 to 362 (SRPLKQRRRI).

The protein belongs to the RBM48 family. In terms of assembly, component of the minor spliceosome. Within this complex, interacts with ARMC7 and PRPF8/PRP8.

Functionally, as a component of the minor spliceosome, involved in the splicing of U12-type introns in pre-mRNAs. The chain is RNA-binding protein 48 (RBM48) from Bos taurus (Bovine).